Reading from the N-terminus, the 90-residue chain is uncharacterized protein (90 aa).

3 consecutive transmembrane segments (helical) span residues 5–27, 40–62, and 67–89; these read FDIL…IIYI, IYLS…TFVA, and MSVV…YSIV.

It is found in the cell membrane. This is an uncharacterized protein from Archaeoglobus fulgidus (strain ATCC 49558 / DSM 4304 / JCM 9628 / NBRC 100126 / VC-16).